A 165-amino-acid chain; its full sequence is MKSVITTVVGAADSASRFPSASDMESVQGSIQRAAARLEAAEKLAGNYDQVAQEAVDAVYNQYPNGATGRQPRKCATEGKEKCKRDFVHYLRLINYCLVTGGTGPLDELAINGQKEVYKALSIDAGTYVAGFSHLRSRGCAPRDMSAQALTAYNQLLDYVINSLG.

Cys-75, Cys-83, and Cys-140 together coordinate phycourobilin.

It belongs to the phycobiliprotein family. Heterodimer of an alpha and a beta chain. Post-translationally, contains three covalently linked phycourobilin chromophores.

Its subcellular location is the cellular thylakoid membrane. Functionally, light-harvesting photosynthetic bile pigment-protein from the phycobiliprotein complex. In Synechococcus sp. (strain WH8103), this protein is C-phycoerythrin class 2 subunit alpha (mpeA).